The chain runs to 322 residues: MSRSALVENVMAMLEDAGFLVSDRCAIRPKSFDIAARRGEDVLLLKILGNIDAFDAQTGGEMRRLGTYLNATPIVIGLRTRDEELKPGVVYFRHGVPVLSPDTAMDLFVEEVPPLIYAAPGGLYVNIDSEILADVREDRDWSLGRLAKELGVSRRTVSKYEDGMDASVEVAAELEDLFDAPLTSPVSVLDGAEEVRDDEPTPDDPDVAPEDEPIVTVFTRIGFEVHPTDRAPFKSVNESDDEHGQVLAGHSAFTETAEKRARIMSSVGEVTRTRSVYVVDELRRESVEGTALIEKEEMENIEDAIDLRDLIMERGEDREEVA.

The HTH cro/C1-type domain maps to 132 to 189 (LADVREDRDWSLGRLAKELGVSRRTVSKYEDGMDASVEVAAELEDLFDAPLTSPVSVL). The segment at residues 143–162 (LGRLAKELGVSRRTVSKYED) is a DNA-binding region (H-T-H motif).

In Haloarcula marismortui (strain ATCC 43049 / DSM 3752 / JCM 8966 / VKM B-1809) (Halobacterium marismortui), this protein is Putative HTH-type transcriptional regulatory protein rrnAC2519.